A 746-amino-acid polypeptide reads, in one-letter code: tRNA(Met) cytidine acetyltransferase TmcA (746 aa).

The disordered stretch occupies residues 181 to 200; sequence ARAETGGNPPSPGDSACRTE. ATP is bound by residues Gln-202, 228-237, and Arg-370; that span reads GRGKSAALGI. An N-acetyltransferase domain is found at 405–617; it reads VAVERLDRDA…VHLPHQLADP (213 aa). Acetyl-CoA contacts are provided by residues 517–519, 524–530, Glu-557, and Arg-564; these read IAV and QGQGLGT.

The protein belongs to the RNA cytidine acetyltransferase family. TmcA subfamily.

The protein resides in the cytoplasm. It carries out the reaction cytidine(34) in elongator tRNA(Met) + acetyl-CoA + ATP + H2O = N(4)-acetylcytidine(34) in elongator tRNA(Met) + ADP + phosphate + CoA + H(+). Its function is as follows. Catalyzes the formation of N(4)-acetylcytidine (ac(4)C) at the wobble position of tRNA(Met), by using acetyl-CoA as an acetyl donor and ATP (or GTP). The protein is tRNA(Met) cytidine acetyltransferase TmcA of Nitrosococcus halophilus (strain Nc4).